The primary structure comprises 432 residues: uncharacterized protein (432 aa).

The segment covering 1–18 has biased composition (basic residues); sequence MAIGDKRKKNRKNKQNKK. Disordered regions lie at residues 1-23, 37-56, and 122-168; these read MAIGDKRKKNRKNKQNKKNKNDN, NSNSLVNSNNKNNNNKNGNG, and STNS…GSSL. Composition is skewed to low complexity over residues 37–53, 122–147, and 154–168; these read NSNSLVNSNNKNNNNKN, STNSNNNNNSTNGNSNSPSIIIQQQQ, and ESQSSNNNNNNGSSL. A coiled-coil region spans residues 181–226; that stretch reads LNDQLKIVQLEQKIVNLEKEIQRMRNEQNQIHKQNLNQYHELLKQI. Disordered stretches follow at residues 270 to 290 and 310 to 432; these read VQPVSTPSSSSNSLASKKSNG and SSKF…STLR. Over residues 274–288 the composition is skewed to low complexity; the sequence is STPSSSSNSLASKKS. Positions 311–324 are enriched in polar residues; the sequence is SKFAQSNSSPSRVN. Over residues 352–378 the composition is skewed to low complexity; it reads KKSATTTTTSSSSNNATTTTAKGSTST. Residues 383 to 414 are compositionally biased toward polar residues; it reads ITNSNNIKNSVLSPKSITKPNTPSNIIFSPLS.

This is an uncharacterized protein from Dictyostelium discoideum (Social amoeba).